The chain runs to 245 residues: 3-deoxy-manno-octulosonate cytidylyltransferase (245 aa).

This sequence belongs to the KdsB family.

The protein resides in the cytoplasm. It carries out the reaction 3-deoxy-alpha-D-manno-oct-2-ulosonate + CTP = CMP-3-deoxy-beta-D-manno-octulosonate + diphosphate. Its pathway is nucleotide-sugar biosynthesis; CMP-3-deoxy-D-manno-octulosonate biosynthesis; CMP-3-deoxy-D-manno-octulosonate from 3-deoxy-D-manno-octulosonate and CTP: step 1/1. It participates in bacterial outer membrane biogenesis; lipopolysaccharide biosynthesis. Functionally, activates KDO (a required 8-carbon sugar) for incorporation into bacterial lipopolysaccharide in Gram-negative bacteria. The sequence is that of 3-deoxy-manno-octulosonate cytidylyltransferase from Rhodopseudomonas palustris (strain BisB18).